The chain runs to 148 residues: Truncated transcription factor CAULIFLOWER D (148 aa).

Residues 1–61 enclose the MADS-box domain; sequence MGRGRVEMKR…GKLFEYSSES (61 aa). The 59-residue stretch at 90–148 folds into the K-box; partial domain; sequence QTNWSMEYSRLKAKIELWERNQRHYLGEDLESISIKELQNLEQQLDTSLKHIRSRKVCK.

In terms of assembly, homodimer capable of binding to CArG-box sequences.

The protein resides in the nucleus. Its function is as follows. Probable transcription factor that promotes early floral meristem identity in synergy with APETALA1, FRUITFULL and LEAFY. Is required subsequently for the transition of an inflorescence meristem into a floral meristem. Seems to be partially redundant to the function of APETALA1. The protein is Truncated transcription factor CAULIFLOWER D (CAL-D) of Brassica oleracea var. botrytis (Cauliflower).